The following is a 621-amino-acid chain: Ubiquitin carboxyl-terminal hydrolase MINDY-2 (621 aa).

2 disordered regions span residues Met1–Tyr106 and Val119–Phe179. At Ser94 the chain carries Phosphoserine. Over residues Ala145–Asp163 the composition is skewed to low complexity. Cys266 functions as the Nucleophile in the catalytic mechanism. His448 functions as the Proton acceptor in the catalytic mechanism. Residues Gly507–Gln559 are ubiquitin-binding domain (UBD). The disordered stretch occupies residues Arg556–Leu621. Positions Ser558–Gly591 are enriched in low complexity. Over residues Ser597–Leu621 the composition is skewed to basic and acidic residues.

Belongs to the MINDY deubiquitinase family. FAM63 subfamily.

It carries out the reaction Thiol-dependent hydrolysis of ester, thioester, amide, peptide and isopeptide bonds formed by the C-terminal Gly of ubiquitin (a 76-residue protein attached to proteins as an intracellular targeting signal).. Functionally, hydrolase that can remove 'Lys-48'-linked conjugated ubiquitin from proteins. Binds to polyubiquitin chains of different linkage types, including 'Lys-6', 'Lys-11', 'Lys-29', 'Lys-33', 'Lys-48' and 'Lys-63'. May play a regulatory role at the level of protein turnover. The polypeptide is Ubiquitin carboxyl-terminal hydrolase MINDY-2 (Homo sapiens (Human)).